Here is a 367-residue protein sequence, read N- to C-terminus: GPN-loop GTPase 1 (367 aa).

Residues 15–22 (GMAGSGKT) and 18–23 (GSGKTT) each bind GTP. The Gly-Pro-Asn (GPN)-loop; involved in dimer interface signature appears at 75-77 (GPN). 178-181 (NKCD) contributes to the GTP binding site. Positions 247 to 290 (EGMDDFLEAVKAKVKEYEEEYVPEMERMKEIQRQTKERQKEAQL) form a coiled coil. The disordered stretch occupies residues 306-332 (VGLTVSDAEDEYNGELVDPDEDDGLTA). Position 311 is a phosphoserine (Ser-311). The segment covering 312–332 (DAEDEYNGELVDPDEDDGLTA) has biased composition (acidic residues).

The protein belongs to the GPN-loop GTPase family. As to quaternary structure, heterodimers with gpn2 or fet5/gpn3. Binds to RNA polymerase II (RNAPII).

The protein localises to the cytoplasm. Its function is as follows. Small GTPase required for proper nuclear import of RNA polymerase II (RNAPII). May act at an RNAP assembly step prior to nuclear import. This is GPN-loop GTPase 1 from Schizosaccharomyces pombe (strain 972 / ATCC 24843) (Fission yeast).